Here is a 225-residue protein sequence, read N- to C-terminus: Probable CDP-diacylglycerol--inositol 3-phosphatidyltransferase 2 (225 aa).

A run of 2 helical transmembrane segments spans residues 6-26 (PATL…RVLL) and 29-49 (IAFS…FFSF). 2 residues coordinate Mg(2+): Asp52 and Asp55. Gly56, Arg60, and Ser66 together coordinate a CDP-1,2-diacyl-sn-glycerol. Residues Asp73 and Asp77 each contribute to the Mg(2+) site. The active-site Proton acceptor is Asp77. 3 consecutive transmembrane segments (helical) span residues 84–104 (LLVI…LLAL), 143–163 (MFMG…LLIA), and 184–204 (LSLL…INVI).

It belongs to the CDP-alcohol phosphatidyltransferase class-I family. Mg(2+) is required as a cofactor. It depends on Mn(2+) as a cofactor.

It localises to the membrane. It carries out the reaction a CDP-1,2-diacyl-sn-glycerol + myo-inositol = a 1,2-diacyl-sn-glycero-3-phospho-(1D-myo-inositol) + CMP + H(+). In terms of biological role, catalyzes the biosynthesis of phosphatidylinositol (PtdIns) as well as PtdIns:inositol exchange reaction. May thus act to reduce an excessive cellular PtdIns content. The exchange activity is due to the reverse reaction of PtdIns synthase and is dependent on CMP, which is tightly bound to the enzyme. This chain is Probable CDP-diacylglycerol--inositol 3-phosphatidyltransferase 2 (PIS2), found in Arabidopsis thaliana (Mouse-ear cress).